We begin with the raw amino-acid sequence, 551 residues long: DNA mismatch repair protein MutL (551 aa).

Belongs to the DNA mismatch repair MutL/HexB family.

This protein is involved in the repair of mismatches in DNA. It is required for dam-dependent methyl-directed DNA mismatch repair. May act as a 'molecular matchmaker', a protein that promotes the formation of a stable complex between two or more DNA-binding proteins in an ATP-dependent manner without itself being part of a final effector complex. In Thermosipho melanesiensis (strain DSM 12029 / CIP 104789 / BI429), this protein is DNA mismatch repair protein MutL.